The sequence spans 307 residues: N-acetylmuramic acid 6-phosphate etherase (307 aa).

The region spanning 60-223 (AAQAIARGGR…STGAMVRIGK (164 aa)) is the SIS domain. Glu88 acts as the Proton donor in catalysis. Residue Glu119 is part of the active site.

The protein belongs to the GCKR-like family. MurNAc-6-P etherase subfamily. In terms of assembly, homodimer.

The enzyme catalyses N-acetyl-D-muramate 6-phosphate + H2O = N-acetyl-D-glucosamine 6-phosphate + (R)-lactate. It participates in amino-sugar metabolism; N-acetylmuramate degradation. In terms of biological role, specifically catalyzes the cleavage of the D-lactyl ether substituent of MurNAc 6-phosphate, producing GlcNAc 6-phosphate and D-lactate. The chain is N-acetylmuramic acid 6-phosphate etherase from Synechococcus elongatus (strain ATCC 33912 / PCC 7942 / FACHB-805) (Anacystis nidulans R2).